A 128-amino-acid polypeptide reads, in one-letter code: MNFIKEFREFAMRGNVVDMAVGVIIGSAFGKIVSSLVSDIFTPVLGILTGGIDFKDMKFVLAQAQGDVPAVTLNYGLFIQNVIDFIIIAFAIFMMIKVINKVRKPEEKKTAPKAETLLTEIRDLLKNK.

Residues 1–16 (MNFIKEFREFAMRGNV) are Cytoplasmic-facing. Residues 17–45 (VDMAVGVIIGSAFGKIVSSLVSDIFTPVL) form a helical membrane-spanning segment. At 46–74 (GILTGGIDFKDMKFVLAQAQGDVPAVTLN) the chain is on the periplasmic side. A helical transmembrane segment spans residues 75–94 (YGLFIQNVIDFIIIAFAIFM). Topologically, residues 95 to 128 (MIKVINKVRKPEEKKTAPKAETLLTEIRDLLKNK) are cytoplasmic.

It belongs to the MscL family. Homopentamer.

It localises to the cell inner membrane. Its function is as follows. Channel that opens in response to stretch forces in the membrane lipid bilayer. Forms a nonselective ion channel with a conductance of about 4 nanosiemens. May participate in the regulation of osmotic pressure changes within the cell. The sequence is that of Large-conductance mechanosensitive channel from Haemophilus influenzae (strain ATCC 51907 / DSM 11121 / KW20 / Rd).